A 310-amino-acid chain; its full sequence is Glycerol-3-phosphate dehydrogenase [NAD(P)+] (310 aa).

Trp-14, Arg-34, Arg-35, and Lys-82 together coordinate NADPH. Sn-glycerol 3-phosphate is bound by residues Lys-82 and Gly-110. Residue Ser-114 participates in NADPH binding. The sn-glycerol 3-phosphate site is built by Lys-165, Asp-218, Ser-228, Arg-229, and Asn-230. Residue Lys-165 is the Proton acceptor of the active site. An NADPH-binding site is contributed by Arg-229. An NADPH-binding site is contributed by Glu-255.

The protein belongs to the NAD-dependent glycerol-3-phosphate dehydrogenase family.

It localises to the cytoplasm. The enzyme catalyses sn-glycerol 3-phosphate + NAD(+) = dihydroxyacetone phosphate + NADH + H(+). It catalyses the reaction sn-glycerol 3-phosphate + NADP(+) = dihydroxyacetone phosphate + NADPH + H(+). It participates in membrane lipid metabolism; glycerophospholipid metabolism. Its function is as follows. Catalyzes the reduction of the glycolytic intermediate dihydroxyacetone phosphate (DHAP) to sn-glycerol 3-phosphate (G3P), the key precursor for phospholipid synthesis. This Acaryochloris marina (strain MBIC 11017) protein is Glycerol-3-phosphate dehydrogenase [NAD(P)+].